Reading from the N-terminus, the 87-residue chain is Small ribosomal subunit protein uS15 (87 aa).

This sequence belongs to the universal ribosomal protein uS15 family. As to quaternary structure, part of the 30S ribosomal subunit. Forms a bridge to the 50S subunit in the 70S ribosome, contacting the 23S rRNA.

In terms of biological role, one of the primary rRNA binding proteins, it binds directly to 16S rRNA where it helps nucleate assembly of the platform of the 30S subunit by binding and bridging several RNA helices of the 16S rRNA. Its function is as follows. Forms an intersubunit bridge (bridge B4) with the 23S rRNA of the 50S subunit in the ribosome. The protein is Small ribosomal subunit protein uS15 of Acetivibrio thermocellus (strain ATCC 27405 / DSM 1237 / JCM 9322 / NBRC 103400 / NCIMB 10682 / NRRL B-4536 / VPI 7372) (Clostridium thermocellum).